The chain runs to 836 residues: Serine/threonine-protein kinase ppk5 (836 aa).

Disordered stretches follow at residues 1 to 29, 192 to 214, 230 to 307, and 328 to 381; these read MVGL…FLSP, INQL…TLSS, CSQF…YKSI, and TPLD…ERQN. Composition is skewed to polar residues over residues 192–205, 232–241, and 265–288; these read INQL…TNYP, QFASPRSSIV, and KPSN…TKLT. Residues 289-298 show a composition bias toward basic and acidic residues; that stretch reads SQRDNDHQKD. A compositionally biased stretch (basic residues) spans 338–347; the sequence is SGKKFNKNSK. A compositionally biased stretch (low complexity) spans 353–362; sequence STISSYSSAS. Residues 518–814 form the Protein kinase domain; that stretch reads YEIIDTVGKG…VDSALQHEFI (297 aa). ATP contacts are provided by residues 524–532 and Lys-547; that span reads VGKGSFGQV. The active-site Proton acceptor is Asp-644. Residue Tyr-678 is modified to Phosphotyrosine.

It belongs to the protein kinase superfamily. CMGC Ser/Thr protein kinase family. MNB/DYRK subfamily.

It is found in the cytoplasm. The enzyme catalyses L-seryl-[protein] + ATP = O-phospho-L-seryl-[protein] + ADP + H(+). It catalyses the reaction L-threonyl-[protein] + ATP = O-phospho-L-threonyl-[protein] + ADP + H(+). Its function is as follows. Has a role in meiosis. The protein is Serine/threonine-protein kinase ppk5 (ppk5) of Schizosaccharomyces pombe (strain 972 / ATCC 24843) (Fission yeast).